The following is a 143-amino-acid chain: Nucleoside diphosphate kinase (143 aa).

6 residues coordinate ATP: lysine 11, phenylalanine 59, arginine 87, threonine 93, arginine 104, and asparagine 114. Residue histidine 117 is the Pros-phosphohistidine intermediate of the active site.

It belongs to the NDK family. As to quaternary structure, homotetramer. Mg(2+) serves as cofactor.

It localises to the cytoplasm. It carries out the reaction a 2'-deoxyribonucleoside 5'-diphosphate + ATP = a 2'-deoxyribonucleoside 5'-triphosphate + ADP. It catalyses the reaction a ribonucleoside 5'-diphosphate + ATP = a ribonucleoside 5'-triphosphate + ADP. Functionally, major role in the synthesis of nucleoside triphosphates other than ATP. The ATP gamma phosphate is transferred to the NDP beta phosphate via a ping-pong mechanism, using a phosphorylated active-site intermediate. The sequence is that of Nucleoside diphosphate kinase from Shewanella piezotolerans (strain WP3 / JCM 13877).